The primary structure comprises 345 residues: Nicotinate-nucleotide--dimethylbenzimidazole phosphoribosyltransferase (345 aa).

Glu311 functions as the Proton acceptor in the catalytic mechanism.

This sequence belongs to the CobT family.

It carries out the reaction 5,6-dimethylbenzimidazole + nicotinate beta-D-ribonucleotide = alpha-ribazole 5'-phosphate + nicotinate + H(+). Its pathway is nucleoside biosynthesis; alpha-ribazole biosynthesis; alpha-ribazole from 5,6-dimethylbenzimidazole: step 1/2. Its function is as follows. Catalyzes the synthesis of alpha-ribazole-5'-phosphate from nicotinate mononucleotide (NAMN) and 5,6-dimethylbenzimidazole (DMB). This is Nicotinate-nucleotide--dimethylbenzimidazole phosphoribosyltransferase from Janthinobacterium sp. (strain Marseille) (Minibacterium massiliensis).